A 326-amino-acid polypeptide reads, in one-letter code: Methionyl-tRNA formyltransferase (326 aa).

110–113 (SLLP) is a binding site for (6S)-5,6,7,8-tetrahydrofolate. A disordered region spans residues 307–326 (VGTRFSPPEAPQREPAPGEA).

The protein belongs to the Fmt family.

The enzyme catalyses L-methionyl-tRNA(fMet) + (6R)-10-formyltetrahydrofolate = N-formyl-L-methionyl-tRNA(fMet) + (6S)-5,6,7,8-tetrahydrofolate + H(+). Its function is as follows. Attaches a formyl group to the free amino group of methionyl-tRNA(fMet). The formyl group appears to play a dual role in the initiator identity of N-formylmethionyl-tRNA by promoting its recognition by IF2 and preventing the misappropriation of this tRNA by the elongation apparatus. This Symbiobacterium thermophilum (strain DSM 24528 / JCM 14929 / IAM 14863 / T) protein is Methionyl-tRNA formyltransferase.